The following is a 407-amino-acid chain: MRPSPALAGGGRTVANLLSATEWMLPSPATQVHTISVLPSHSPPSPPHHFAFSNLTTAPKRNGGKGEEEGRPRFEVVRDDLLHPLANGNKARKLDALLPLLRRRGATDVVTCGGCQSAHAAATAVHCAEWGMRPHILLRGEQPDIPTGYNLISLMFGNVAYASRSVYAHRDEMLYNHARKVAGTGGTVLWADDISKEDFVLDEDNGCEIGSRRVVIIKEGAGDVQALLGVIRLVEYLYNLSSFHKHENVHVVVDAGTGTTAVGLALGAVCLGLHWRVTAVMLADTLERYKEREKSLISDFKKLCHNNYHEMVGENDIGDSLVEWVERFSPRRFGKVLNGEIALCRQIAQQTGILLDPMYTLAGWEQAVDLCVGDSRTKVVMIHTGGTLGFCGLAQRYSSHFTSDEQT.

A mitochondrion-targeting transit peptide spans 1–34 (MRPSPALAGGGRTVANLLSATEWMLPSPATQVHT). Residues 39-72 (PSHSPPSPPHHFAFSNLTTAPKRNGGKGEEEGRP) form a disordered region. The residue at position 90 (lysine 90) is an N6-(pyridoxal phosphate)lysine.

It belongs to the ACC deaminase/D-cysteine desulfhydrase family. Pyridoxal 5'-phosphate serves as cofactor.

Its subcellular location is the mitochondrion. The catalysed reaction is D-cysteine + H2O = hydrogen sulfide + pyruvate + NH4(+) + H(+). Catalyzes the production of hydrogen sulfide (H2S) from cysteine. This is Putative D-cysteine desulfhydrase 2, mitochondrial from Oryza sativa subsp. japonica (Rice).